Consider the following 100-residue polypeptide: Putative pterin-4-alpha-carbinolamine dehydratase (100 aa).

The protein belongs to the pterin-4-alpha-carbinolamine dehydratase family.

The enzyme catalyses (4aS,6R)-4a-hydroxy-L-erythro-5,6,7,8-tetrahydrobiopterin = (6R)-L-erythro-6,7-dihydrobiopterin + H2O. The sequence is that of Putative pterin-4-alpha-carbinolamine dehydratase from Bradyrhizobium diazoefficiens (strain JCM 10833 / BCRC 13528 / IAM 13628 / NBRC 14792 / USDA 110).